The sequence spans 104 residues: Inclusion membrane protein F (104 aa).

Helical transmembrane passes span 39–59 (LVVA…SLVA) and 70–90 (LAVL…VLFI).

The protein localises to the secreted. It localises to the host vacuole. It is found in the host pathogen-containing vacuole. The protein resides in the host pathogen-containing vacuole membrane. Inclusion membrane protein probably involved in early modification events of the chlamydial inclusion. In Chlamydia trachomatis serovar D (strain ATCC VR-885 / DSM 19411 / UW-3/Cx), this protein is Inclusion membrane protein F (incF).